A 506-amino-acid chain; its full sequence is Cobyric acid synthase (506 aa).

The GATase cobBQ-type domain occupies 251-448 (DIDIAVVQVP…LHGLFDSDAF (198 aa)). Cys332 functions as the Nucleophile in the catalytic mechanism. The active site involves His440.

This sequence belongs to the CobB/CobQ family. CobQ subfamily.

It participates in cofactor biosynthesis; adenosylcobalamin biosynthesis. Catalyzes amidations at positions B, D, E, and G on adenosylcobyrinic A,C-diamide. NH(2) groups are provided by glutamine, and one molecule of ATP is hydrogenolyzed for each amidation. This Citrobacter koseri (strain ATCC BAA-895 / CDC 4225-83 / SGSC4696) protein is Cobyric acid synthase.